A 347-amino-acid polypeptide reads, in one-letter code: Merozoite surface protein P12 (347 aa).

A signal peptide (or 25) is located at residues Met-1 to Cys-23. 2 consecutive 6-Cys domains span residues Lys-27 to Leu-172 and Lys-175 to Ser-305. Asn-28 carries N-linked (GlcNAc...) asparagine glycosylation. 3 disulfide bridges follow: Cys-31/Cys-53, Cys-67/Cys-138, and Cys-81/Cys-136. Residues Asn-147, Asn-200, Asn-228, Asn-242, Asn-265, and Asn-322 are each glycosylated (N-linked (GlcNAc...) asparagine). 3 cysteine pairs are disulfide-bonded: Cys-179–Cys-211, Cys-225–Cys-286, and Cys-236–Cys-284. Asn-322 carries GPI-anchor amidated asparagine lipidation. Positions Ser-323–Leu-347 are cleaved as a propeptide — removed in mature form.

Heterodimer; heterodimerizes with PF41. May form an antiparallel heterodimer with PF41.

It localises to the cell surface. The protein resides in the cell membrane. The sequence is that of Merozoite surface protein P12 (PF12) from Plasmodium falciparum.